The chain runs to 184 residues: Ribosome-recycling factor (184 aa).

The protein belongs to the RRF family.

Its subcellular location is the cytoplasm. Responsible for the release of ribosomes from messenger RNA at the termination of protein biosynthesis. May increase the efficiency of translation by recycling ribosomes from one round of translation to another. This Clostridium botulinum (strain ATCC 19397 / Type A) protein is Ribosome-recycling factor.